The sequence spans 542 residues: POTE ankyrin domain family member C (542 aa).

ANK repeat units follow at residues 138-171 (EDLD…KRDK), 172-201 (QKRT…QLNV), 205-234 (KKRT…DQNI), 238-267 (YGNT…DIES), 271-300 (CGLT…NLNA), 304-333 (YGRT…DVSS), and 337-373 (SGQT…SENS). The disordered stretch occupies residues 369–494 (SSENSNPEQD…NTGISQDEIL (126 aa)). Composition is skewed to basic and acidic residues over residues 377–392 (QDLK…RLKV), 401–412 (MSQEPEINKDCD), and 466–481 (EEYH…KQLS). Polar residues predominate over residues 482–494 (EEQNTGISQDEIL). A coiled-coil region spans residues 489–538 (SQDEILTNKQKQIEVAEKKMNSELSLSHKKEEDLLRENSMLQEEIAMLIS).

Belongs to the POTE family. Expressed in prostate and testis.

The chain is POTE ankyrin domain family member C (POTEC) from Homo sapiens (Human).